A 306-amino-acid chain; its full sequence is Pyridoxal 5'-phosphate synthase subunit PdxS (306 aa).

Asp36 contributes to the D-ribose 5-phosphate binding site. The Schiff-base intermediate with D-ribose 5-phosphate role is filled by Lys93. Gly165 lines the D-ribose 5-phosphate pocket. D-glyceraldehyde 3-phosphate is bound at residue Arg177. Residues Gly226 and 247–248 contribute to the D-ribose 5-phosphate site; that span reads GS.

Belongs to the PdxS/SNZ family. In the presence of PdxT, forms a dodecamer of heterodimers.

The enzyme catalyses aldehydo-D-ribose 5-phosphate + D-glyceraldehyde 3-phosphate + L-glutamine = pyridoxal 5'-phosphate + L-glutamate + phosphate + 3 H2O + H(+). The protein operates within cofactor biosynthesis; pyridoxal 5'-phosphate biosynthesis. In terms of biological role, catalyzes the formation of pyridoxal 5'-phosphate from ribose 5-phosphate (RBP), glyceraldehyde 3-phosphate (G3P) and ammonia. The ammonia is provided by the PdxT subunit. Can also use ribulose 5-phosphate and dihydroxyacetone phosphate as substrates, resulting from enzyme-catalyzed isomerization of RBP and G3P, respectively. The polypeptide is Pyridoxal 5'-phosphate synthase subunit PdxS (Nocardia farcinica (strain IFM 10152)).